An 82-amino-acid chain; its full sequence is Zinc finger CCCH domain-containing protein 13 (82 aa).

2 C3H1-type zinc fingers span residues 9–37 (RPGEPECSYYLRTGNCYLKQNCKYHHPKN) and 55–82 (RPGQAICPHYSRFGICRSGPTCKFDHFT).

This Arabidopsis thaliana (Mouse-ear cress) protein is Zinc finger CCCH domain-containing protein 13.